Reading from the N-terminus, the 221-residue chain is uncharacterized protein (221 aa).

An MOSC domain is found at 33 to 167 (RPAKSAVMLY…VSPGANLELL (135 aa)).

This is an uncharacterized protein from Bacillus subtilis (strain 168).